The sequence spans 502 residues: 9-beta-pimara-7,15-diene oxidase (502 aa).

2 helical membrane passes run 4 to 26 and 106 to 128; these read INSE…ALLT and LLVS…GAYW. A heme-binding site is contributed by Cys438.

This sequence belongs to the cytochrome P450 family. Heme serves as cofactor.

The protein resides in the membrane. The enzyme catalyses 9beta-pimara-7,15-diene + 3 reduced [NADPH--hemoprotein reductase] + 3 O2 = 9beta-pimara-7,15-dien-19-oate + 3 oxidized [NADPH--hemoprotein reductase] + 4 H2O + 4 H(+). Functionally, involved in momilactone phytoalexins biosynthesis; acts as a multifunctional diterpene oxidase. Participates in the biosynthetic steps between 9-beta-pimara-7,15-diene and 3-beta-hydroxy-9-beta-pimara-7,15-dien-19,6-beta-olide. Also catalyzes consecutive oxidations at C19 of syn-stemod-13(17)-ene. The sequence is that of 9-beta-pimara-7,15-diene oxidase (CYP99A3) from Oryza sativa subsp. japonica (Rice).